Consider the following 148-residue polypeptide: Glutamyl-tRNA(Gln) amidotransferase subunit C, mitochondrial (148 aa).

The protein belongs to the GatC family. Subunit of the heterotrimeric GatCAB amidotransferase (AdT) complex, composed of A, B and C subunits.

It localises to the mitochondrion. It carries out the reaction L-glutamyl-tRNA(Gln) + L-glutamine + ATP + H2O = L-glutaminyl-tRNA(Gln) + L-glutamate + ADP + phosphate + H(+). Allows the formation of correctly charged Gln-tRNA(Gln) through the transamidation of misacylated Glu-tRNA(Gln) in the mitochondria. The reaction takes place in the presence of glutamine and ATP through an activated gamma-phospho-Glu-tRNA(Gln). The protein is Glutamyl-tRNA(Gln) amidotransferase subunit C, mitochondrial of Drosophila simulans (Fruit fly).